A 173-amino-acid chain; its full sequence is Photosystem I assembly protein Ycf3 (173 aa).

3 TPR repeats span residues 36 to 69, 73 to 106, and 121 to 154; these read AFAY…EQGE, SYIL…NPRL, and GELS…APNN.

It belongs to the Ycf3 family.

It localises to the cellular thylakoid membrane. In terms of biological role, essential for the assembly of the photosystem I (PSI) complex. May act as a chaperone-like factor to guide the assembly of the PSI subunits. The polypeptide is Photosystem I assembly protein Ycf3 (Synechococcus sp. (strain JA-2-3B'a(2-13)) (Cyanobacteria bacterium Yellowstone B-Prime)).